Reading from the N-terminus, the 447-residue chain is ATP-dependent protease ATPase subunit HslU (447 aa).

Residues isoleucine 18, 60–65, aspartate 260, glutamate 325, and arginine 397 contribute to the ATP site; that span reads GVGKTE.

This sequence belongs to the ClpX chaperone family. HslU subfamily. As to quaternary structure, a double ring-shaped homohexamer of HslV is capped on each side by a ring-shaped HslU homohexamer. The assembly of the HslU/HslV complex is dependent on binding of ATP.

It is found in the cytoplasm. Functionally, ATPase subunit of a proteasome-like degradation complex; this subunit has chaperone activity. The binding of ATP and its subsequent hydrolysis by HslU are essential for unfolding of protein substrates subsequently hydrolyzed by HslV. HslU recognizes the N-terminal part of its protein substrates and unfolds these before they are guided to HslV for hydrolysis. This chain is ATP-dependent protease ATPase subunit HslU, found in Paraburkholderia phymatum (strain DSM 17167 / CIP 108236 / LMG 21445 / STM815) (Burkholderia phymatum).